A 576-amino-acid chain; its full sequence is Sulfite reductase [NADPH] hemoprotein beta-component (576 aa).

Basic and acidic residues predominate over residues 1–12; that stretch reads MNVKTEPDRSRD. A disordered region spans residues 1–25; that stretch reads MNVKTEPDRSRDVSQPLDKLGPDET. Residues Cys441, Cys447, Cys486, and Cys490 each coordinate [4Fe-4S] cluster. Cys490 lines the siroheme pocket.

It belongs to the nitrite and sulfite reductase 4Fe-4S domain family. As to quaternary structure, alpha(8)-beta(8). The alpha component is a flavoprotein, the beta component is a hemoprotein. It depends on siroheme as a cofactor. [4Fe-4S] cluster is required as a cofactor.

It carries out the reaction hydrogen sulfide + 3 NADP(+) + 3 H2O = sulfite + 3 NADPH + 4 H(+). Its pathway is sulfur metabolism; hydrogen sulfide biosynthesis; hydrogen sulfide from sulfite (NADPH route): step 1/1. In terms of biological role, component of the sulfite reductase complex that catalyzes the 6-electron reduction of sulfite to sulfide. This is one of several activities required for the biosynthesis of L-cysteine from sulfate. This is Sulfite reductase [NADPH] hemoprotein beta-component from Nitrobacter hamburgensis (strain DSM 10229 / NCIMB 13809 / X14).